Here is a 93-residue protein sequence, read N- to C-terminus: Cobalt transport protein CbiN (93 aa).

The next 2 helical transmembrane spans lie at 5 to 25 (LMLL…NHGG) and 63 to 83 (LLFT…LGYC).

The protein belongs to the CbiN family. In terms of assembly, forms an energy-coupling factor (ECF) transporter complex composed of an ATP-binding protein (A component, CbiO), a transmembrane protein (T component, CbiQ) and 2 possible substrate-capture proteins (S components, CbiM and CbiN) of unknown stoichimetry.

It localises to the cell inner membrane. The protein operates within cofactor biosynthesis; adenosylcobalamin biosynthesis. Part of the energy-coupling factor (ECF) transporter complex CbiMNOQ involved in cobalt import. This chain is Cobalt transport protein CbiN, found in Salmonella choleraesuis (strain SC-B67).